Here is a 317-residue protein sequence, read N- to C-terminus: Ribosomal protein L11 methyltransferase (317 aa).

The S-adenosyl-L-methionine site is built by Thr158, Gly179, Asp201, and Asn244.

Belongs to the methyltransferase superfamily. PrmA family.

Its subcellular location is the cytoplasm. The catalysed reaction is L-lysyl-[protein] + 3 S-adenosyl-L-methionine = N(6),N(6),N(6)-trimethyl-L-lysyl-[protein] + 3 S-adenosyl-L-homocysteine + 3 H(+). Functionally, methylates ribosomal protein L11. The polypeptide is Ribosomal protein L11 methyltransferase (Lactococcus lactis subsp. cremoris (strain SK11)).